The following is a 383-amino-acid chain: Succinyl-diaminopimelate desuccinylase (383 aa).

His-79 serves as a coordination point for Zn(2+). Residue Asp-81 is part of the active site. Asp-110 is a binding site for Zn(2+). Glu-141 serves as the catalytic Proton acceptor. Positions 142, 170, and 355 each coordinate Zn(2+).

Belongs to the peptidase M20A family. DapE subfamily. In terms of assembly, homodimer. It depends on Zn(2+) as a cofactor. Co(2+) is required as a cofactor.

It carries out the reaction N-succinyl-(2S,6S)-2,6-diaminopimelate + H2O = (2S,6S)-2,6-diaminopimelate + succinate. Its pathway is amino-acid biosynthesis; L-lysine biosynthesis via DAP pathway; LL-2,6-diaminopimelate from (S)-tetrahydrodipicolinate (succinylase route): step 3/3. Its function is as follows. Catalyzes the hydrolysis of N-succinyl-L,L-diaminopimelic acid (SDAP), forming succinate and LL-2,6-diaminopimelate (DAP), an intermediate involved in the bacterial biosynthesis of lysine and meso-diaminopimelic acid, an essential component of bacterial cell walls. This is Succinyl-diaminopimelate desuccinylase from Helicobacter pylori (strain P12).